The primary structure comprises 430 residues: Ribosomal protein uS12 methylthiotransferase RimO (430 aa).

The 116-residue stretch at 1 to 116 (MRVGIKVLGC…IANAIENGTD (116 aa)) folds into the MTTase N-terminal domain. Cysteine 10, cysteine 46, cysteine 79, cysteine 148, cysteine 152, and cysteine 155 together coordinate [4Fe-4S] cluster. The Radical SAM core domain occupies 134–365 (LEERPYAYVK…LLQAEISNSR (232 aa)). Residues 367–430 (DRFVGKKLKF…DEYDMWGSVI (64 aa)) form the TRAM domain.

This sequence belongs to the methylthiotransferase family. RimO subfamily. In terms of assembly, monomer. [4Fe-4S] cluster serves as cofactor.

It localises to the cytoplasm. It catalyses the reaction L-aspartate(89)-[ribosomal protein uS12]-hydrogen + (sulfur carrier)-SH + AH2 + 2 S-adenosyl-L-methionine = 3-methylsulfanyl-L-aspartate(89)-[ribosomal protein uS12]-hydrogen + (sulfur carrier)-H + 5'-deoxyadenosine + L-methionine + A + S-adenosyl-L-homocysteine + 2 H(+). In terms of biological role, catalyzes the methylthiolation of an aspartic acid residue of ribosomal protein uS12. This chain is Ribosomal protein uS12 methylthiotransferase RimO, found in Thermotoga maritima (strain ATCC 43589 / DSM 3109 / JCM 10099 / NBRC 100826 / MSB8).